The primary structure comprises 236 residues: 1-(5-phosphoribosyl)-5-[(5-phosphoribosylamino)methylideneamino] imidazole-4-carboxamide isomerase (236 aa).

Catalysis depends on Asp8, which acts as the Proton acceptor. Asp127 acts as the Proton donor in catalysis.

The protein belongs to the HisA/HisF family.

The protein localises to the cytoplasm. The enzyme catalyses 1-(5-phospho-beta-D-ribosyl)-5-[(5-phospho-beta-D-ribosylamino)methylideneamino]imidazole-4-carboxamide = 5-[(5-phospho-1-deoxy-D-ribulos-1-ylimino)methylamino]-1-(5-phospho-beta-D-ribosyl)imidazole-4-carboxamide. It functions in the pathway amino-acid biosynthesis; L-histidine biosynthesis; L-histidine from 5-phospho-alpha-D-ribose 1-diphosphate: step 4/9. The chain is 1-(5-phosphoribosyl)-5-[(5-phosphoribosylamino)methylideneamino] imidazole-4-carboxamide isomerase from Campylobacter hominis (strain ATCC BAA-381 / DSM 21671 / CCUG 45161 / LMG 19568 / NCTC 13146 / CH001A).